The chain runs to 168 residues: Xanthine-guanine phosphoribosyltransferase (168 aa).

Residues 43–44 and 102–110 each bind 5-phospho-alpha-D-ribose 1-diphosphate; these read RG and DDLVDTGAT. Mg(2+) is bound at residue Asp-103. Asp-106 and Ile-149 together coordinate guanine. Positions 106 and 149 each coordinate xanthine. GMP is bound by residues 106 to 110 and 148 to 149; these read DTGAT and WI.

The protein belongs to the purine/pyrimidine phosphoribosyltransferase family. XGPT subfamily. As to quaternary structure, homotetramer. Mg(2+) is required as a cofactor.

The protein resides in the cell inner membrane. The enzyme catalyses GMP + diphosphate = guanine + 5-phospho-alpha-D-ribose 1-diphosphate. It carries out the reaction XMP + diphosphate = xanthine + 5-phospho-alpha-D-ribose 1-diphosphate. It catalyses the reaction IMP + diphosphate = hypoxanthine + 5-phospho-alpha-D-ribose 1-diphosphate. Its pathway is purine metabolism; GMP biosynthesis via salvage pathway; GMP from guanine: step 1/1. The protein operates within purine metabolism; XMP biosynthesis via salvage pathway; XMP from xanthine: step 1/1. Its function is as follows. Purine salvage pathway enzyme that catalyzes the transfer of the ribosyl-5-phosphate group from 5-phospho-alpha-D-ribose 1-diphosphate (PRPP) to the N9 position of the 6-oxopurines guanine and xanthine to form the corresponding ribonucleotides GMP (guanosine 5'-monophosphate) and XMP (xanthosine 5'-monophosphate), with the release of PPi. To a lesser extent, also acts on hypoxanthine. The sequence is that of Xanthine-guanine phosphoribosyltransferase from Nitrobacter winogradskyi (strain ATCC 25391 / DSM 10237 / CIP 104748 / NCIMB 11846 / Nb-255).